The sequence spans 436 residues: Bystin (436 aa).

At Thr-145 the chain carries Phosphothreonine. Residues Ser-148 and Ser-152 each carry the phosphoserine modification.

It belongs to the bystin family.

The protein localises to the nucleus. It is found in the nucleolus. Its function is as follows. Required for processing of 20S pre-rRNA precursor and biogenesis of 40S ribosomal subunits. In Drosophila melanogaster (Fruit fly), this protein is Bystin (bys).